The chain runs to 252 residues: MAQSRSLLLSIAVNALLVGVLLYSVAVNRTQEGSLQLSAVRGKIAAPRTSFQNAVSRVSRNQLPSSSRKAVAQAFLSNPDMVPDMGKRKLMNNLVLAAVAPVVASAGGCYLYYFYPPQTGGGGGAVGALDALGNPVSAESWFKSHKKNARDLVQGIKGDPTYLIVNDDGSTLNSYGLNAICTHLGCVVPWDAASNKFKCPCHGSQYAPDGHVVRGPAPRPLQLAHVEDDNGKILLSPWTETDFRTGEKPWWA.

A helical transmembrane segment spans residues 94–114 (LVLAAVAPVVASAGGCYLYYF). In terms of domain architecture, Rieske spans 141 to 235 (WFKSHKKNAR…VEDDNGKILL (95 aa)). The [2Fe-2S] cluster site is built by C181, H183, C199, and H202. Residues C186 and C201 are joined by a disulfide bond.

It belongs to the Rieske iron-sulfur protein family. As to quaternary structure, the 4 large subunits of the cytochrome b6-f complex are cytochrome b6, subunit IV (17 kDa polypeptide, petD), cytochrome f and the Rieske protein, while the 4 small subunits are petG, petL, petM and petN. The complex functions as a dimer. Requires [2Fe-2S] cluster as cofactor.

It localises to the plastid. It is found in the chloroplast thylakoid membrane. The enzyme catalyses 2 oxidized [plastocyanin] + a plastoquinol + 2 H(+)(in) = 2 reduced [plastocyanin] + a plastoquinone + 4 H(+)(out). Component of the cytochrome b6-f complex, which mediates electron transfer between photosystem II (PSII) and photosystem I (PSI), cyclic electron flow around PSI, and state transitions. The protein is Cytochrome b6-f complex iron-sulfur subunit, chloroplastic (petC) of Bigelowiella natans (Pedinomonas minutissima).